Consider the following 629-residue polypeptide: Sushi domain-containing protein 5 (629 aa).

The first 35 residues, 1–35 (MTAEGPSPPARWHRRLPGLWAAALLLLGLPRLSVR), serve as a signal peptide directing secretion. The Extracellular portion of the chain corresponds to 36 to 574 (ADGKFFVLES…DGCPGLSRGP (539 aa)). In terms of domain architecture, Link spans 39-134 (KFFVLESQNG…GGTYSALCIK (96 aa)). Intrachain disulfides connect cysteine 61-cysteine 132, cysteine 140-cysteine 184, and cysteine 167-cysteine 197. Residues 138–199 (KPCGDPPSFP…WYGLVQACGK (62 aa)) form the Sushi domain. A compositionally biased stretch (basic and acidic residues) spans 225-249 (EDSRTEADEDRGQGDSSEEAPKQDR). Disordered stretches follow at residues 225–252 (EDSR…RLVS) and 344–403 (DGPS…GLDE). The helical transmembrane segment at 575–595 (VIATIVTVLCLLLLLAGVGMV) threads the bilayer. At 596–629 (WGYRKCQHKSSVYKLNVGQRQARHYHQQIEMEKV) the chain is on the cytoplasmic side.

It localises to the membrane. The protein is Sushi domain-containing protein 5 (SUSD5) of Homo sapiens (Human).